A 507-amino-acid polypeptide reads, in one-letter code: Probable lipid II flippase MurJ (507 aa).

Helical transmembrane passes span Leu-3–Val-23, Ile-54–Ile-74, Leu-92–Ile-112, Ile-132–Ser-152, Phe-156–Ile-176, Ile-185–Cys-205, Ile-268–Met-288, Ile-310–Thr-330, Ile-351–Phe-371, Thr-379–Met-399, Ile-405–Tyr-425, Ile-438–Leu-458, and Leu-472–Gly-492.

Belongs to the MurJ/MviN family.

It localises to the cell inner membrane. It participates in cell wall biogenesis; peptidoglycan biosynthesis. Its function is as follows. Involved in peptidoglycan biosynthesis. Transports lipid-linked peptidoglycan precursors from the inner to the outer leaflet of the cytoplasmic membrane. The sequence is that of Probable lipid II flippase MurJ from Rickettsia prowazekii (strain Madrid E).